The chain runs to 238 residues: Protein FEV (238 aa).

The segment at residues 47–127 (IQLWQFLLEL…HGKRYAYRFD (81 aa)) is a DNA-binding region (ETS). The segment at 129 to 238 (QGLAQACQPP…AASHLGGHYH (110 aa)) is may mediate active transcriptional repression.

This sequence belongs to the ETS family. In brain, exclusively expressed in the major serotonergic neurons of the dorsal and median raphe nuclei located in the midbrain and pons. Also detected in prostate and small intestine.

Its subcellular location is the nucleus. In terms of biological role, functions as a transcriptional regulator. According to PubMed:12761502, it functions as a transcriptional repressor. Functions in the differentiation and the maintenance of the central serotonergic neurons. May play a role in cell growth. The sequence is that of Protein FEV (FEV) from Homo sapiens (Human).